The following is a 157-amino-acid chain: Chromophore lyase CpcS/CpeS 1 (157 aa).

Belongs to the CpcS/CpeS biliprotein lyase family.

It is found in the plastid. Its subcellular location is the organellar chromatophore. Covalently attaches a chromophore to Cys residue(s) of phycobiliproteins. The chain is Chromophore lyase CpcS/CpeS 1 from Paulinella chromatophora.